Reading from the N-terminus, the 85-residue chain is Conotoxin Lv15a (85 aa).

The N-terminal stretch at 1–23 is a signal peptide; sequence MEKLTVLILVATVLLMIQVLAQS. Residues 24 to 49 constitute a propeptide that is removed on maturation; it reads GGDKHLKRRPKQYATKRLSALMRGHR. Gln-50 is subject to Pyrrolidone carboxylic acid.

It belongs to the conotoxin O2 superfamily. Post-translationally, contains 4 disulfide bonds. As to expression, expressed by the venom duct.

It is found in the secreted. This is Conotoxin Lv15a from Conus lividus (Livid cone).